Reading from the N-terminus, the 508-residue chain is Erythropoietin receptor (508 aa).

Positions 1–24 (MDHLGASLWPQVGSLCLLLAGAAW) are cleaved as a signal peptide. The Extracellular segment spans residues 25–250 (APPPNLPDPK…SLLTPSDLDP (226 aa)). Residues Cys52 and Cys62 are joined by a disulfide bond. N-linked (GlcNAc...) asparagine glycosylation occurs at Asn76. Cys91 and Cys107 are joined by a disulfide. The 101-residue stretch at 147–247 (APVGLVARLA…EPVSLLTPSD (101 aa)) folds into the Fibronectin type-III domain. The WSXWS motif signature appears at 233 to 237 (WSAWS). A helical transmembrane segment spans residues 251–273 (LILTLSLILVVILVLLTVLALLS). Residues 274 to 508 (HRRALKQKIW…PLPPSYVACS (235 aa)) are Cytoplasmic-facing. A Glycyl lysine isopeptide (Lys-Gly) (interchain with G-Cter in ubiquitin) cross-link involves residue Lys281. A Box 1 motif motif is present at residues 282–290 (IWPGIPSPE). A phosphotyrosine; by JAK2 mark is found at Tyr368 and Tyr426. The ITIM motif signature appears at 452–457 (LKYLYL). A Glycyl lysine isopeptide (Lys-Gly) (interchain with G-Cter in ubiquitin) cross-link involves residue Lys453. Phosphotyrosine; by JAK2 is present on residues Tyr454, Tyr456, Tyr468, Tyr485, Tyr489, and Tyr504. The tract at residues 454 to 456 (YLY) is required for high-affinity SOCS3 binding. The segment at 467-494 (DYSSGDSQGAQGGLSDGPYSNPYENSLI) is disordered.

Belongs to the type I cytokine receptor family. Type 1 subfamily. Forms homodimers on EPO stimulation. The tyrosine-phosphorylated form interacts with several SH2 domain-containing proteins including LYN, the adapter protein SH2B2, PTPN6, PTPN11, JAK2, PI3 kinases, STAT5A/B, SOCS3, CRKL. Interacts with INPP5D/SHIP1. SH2B2 binding inhibits the JAK-STAT signaling. Interacts with RHEX; this interaction occurs in a erythropoietin (EPO)-dependent manner. Interacts with ATXN2L. In terms of processing, on EPO stimulation, phosphorylated on C-terminal tyrosine residues by JAK2. The phosphotyrosine motifs are also recruitment sites for several SH2-containing proteins and adapter proteins which mediate cell proliferation. Phosphorylation on Tyr-454 is required for PTPN6 interaction, Tyr-426 for PTPN11. Tyr-426 is also required for SOCS3 binding, but Tyr-454/Tyr-456 motif is the preferred binding site. Post-translationally, ubiquitinated by the ECS(SOCS2) complex following ligand-binding and phosphorylation by JAK2, leading to its degradation by the proteasome. Regulation by the ECS(SOCS2) complex acts as a negative feedback loop of erythropoietin-mediated signaling pathway. Ubiquitination at Lys-281 mediates receptor internalization, whereas ubiquitination at Lys-453 promotes trafficking of activated receptors to the lysosomes for degradation. Ubiquitinated by NOSIP; appears to be either multi-monoubiquitinated or polyubiquitinated. Ubiquitination mediates proliferation and survival of EPO-dependent cells. Erythroid cells and erythroid progenitor cells. In terms of tissue distribution, isoform EPOR-F is the most abundant form in EPO-dependent erythroleukemia cells and in late-stage erythroid progenitors. As to expression, isoform EPOR-S and isoform EPOR-T are the predominant forms in bone marrow. Isoform EPOR-S and isoform EPOR-T are the predominant forms in bone marrow. Isoform EPOR-T is the most abundant from in early-stage erythroid progenitor cells.

The protein resides in the cell membrane. It localises to the secreted. Receptor for erythropoietin, which mediates erythropoietin-induced erythroblast proliferation and differentiation. Upon EPO stimulation, EPOR dimerizes triggering the JAK2/STAT5 signaling cascade. In some cell types, can also activate STAT1 and STAT3. May also activate the LYN tyrosine kinase. In terms of biological role, acts as a dominant-negative receptor of EPOR-mediated signaling. The chain is Erythropoietin receptor from Homo sapiens (Human).